The following is a 96-amino-acid chain: Putative translation initiation factor IF-1, chloroplastic (96 aa).

The 40-residue stretch at 18 to 57 folds into the S1-like domain; it reads INYVSGKIRHSFIRILPGDRVKIEVSPYDSTKGRIIYRLH.

It belongs to the IF-1 family. Component of the 30S ribosomal translation pre-initiation complex which assembles on the 30S ribosome in the order IF-2 and IF-3, IF-1 and N-formylmethionyl-tRNA(fMet); mRNA recruitment can occur at any time during PIC assembly.

Its subcellular location is the plastid. It is found in the chloroplast. One of the essential components for the initiation of protein synthesis. Stabilizes the binding of IF-2 and IF-3 on the 30S subunit to which N-formylmethionyl-tRNA(fMet) subsequently binds. Helps modulate mRNA selection, yielding the 30S pre-initiation complex (PIC). Upon addition of the 50S ribosomal subunit IF-1, IF-2 and IF-3 are released leaving the mature 70S translation initiation complex. The polypeptide is Putative translation initiation factor IF-1, chloroplastic (infA) (Nicotiana tabacum (Common tobacco)).